We begin with the raw amino-acid sequence, 259 residues long: Ribosomal RNA small subunit methyltransferase A (259 aa).

Residues N12, L14, G39, E60, D84, and N102 each contribute to the S-adenosyl-L-methionine site.

It belongs to the class I-like SAM-binding methyltransferase superfamily. rRNA adenine N(6)-methyltransferase family. RsmA subfamily.

Its subcellular location is the cytoplasm. The catalysed reaction is adenosine(1518)/adenosine(1519) in 16S rRNA + 4 S-adenosyl-L-methionine = N(6)-dimethyladenosine(1518)/N(6)-dimethyladenosine(1519) in 16S rRNA + 4 S-adenosyl-L-homocysteine + 4 H(+). Functionally, specifically dimethylates two adjacent adenosines (A1518 and A1519) in the loop of a conserved hairpin near the 3'-end of 16S rRNA in the 30S particle. May play a critical role in biogenesis of 30S subunits. The chain is Ribosomal RNA small subunit methyltransferase A from Nitrosospira multiformis (strain ATCC 25196 / NCIMB 11849 / C 71).